We begin with the raw amino-acid sequence, 359 residues long: Cytohesin-interacting protein (359 aa).

Residues 77 to 166 (LVTVEKQDNE…LLTIETLNGT (90 aa)) form the PDZ domain. The segment at 166 to 188 (TMILKRTELEAKLQVLKQTLKQK) is interaction with CYTH1. Residues 166 to 188 (TMILKRTELEAKLQVLKQTLKQK) adopt a coiled-coil conformation.

Interacts with CYTH1 and SNX27. In terms of tissue distribution, expressed in lymph nodes, thymus, spleen, lung, peripheral blood leukocytes and bone marrow.

It localises to the cytoplasm. Its subcellular location is the early endosome. Its function is as follows. By its binding to cytohesin-1 (CYTH1), it modifies activation of ARFs by CYTH1 and its precise function may be to sequester CYTH1 in the cytoplasm. This Homo sapiens (Human) protein is Cytohesin-interacting protein (CYTIP).